The primary structure comprises 206 residues: Macrophage immunometabolism regulator (206 aa).

This sequence belongs to the UNC119-binding protein family. As to quaternary structure, interacts with unc119 family proteins; interaction preferentially takes place when unc119 proteins are unliganded with myristoylated proteins.

Its subcellular location is the cytoplasm. It is found in the cell projection. The protein resides in the cilium. Its function is as follows. May play a role in immune regulation through regulation of the macrophage function. Involved in the recruitment of macrophages in response to injury. May also play a role in trafficking of proteins via its interaction with unc119 family cargo adapters. May play a role in ciliary membrane localization. Regulates the macrophage function, by enhancing the resolution of inflammation and wound repair functions mediated by M2 macrophages. The regulation of macrophage function is, due at least in part, to the role of C5orf30 in regulating ability to inhibit glycolysis. Probably plays alaso a role in trafficking of proteins via its interaction with UNC119 and UNC119B cargo adapters: may help the release of UNC119 and UNC119B cargo or the recycling of UNC119 and UNC119B. May play a role in ciliary membrane localization via its interaction with UNC119B and protein transport into photoreceptor cells. The sequence is that of Macrophage immunometabolism regulator (macir) from Danio rerio (Zebrafish).